A 313-amino-acid chain; its full sequence is GTPase Era (313 aa).

One can recognise an Era-type G domain in the interval Arg-13–Glu-186. The interval Gly-21–Ser-28 is G1. Gly-21–Ser-28 is a binding site for GTP. The G2 stretch occupies residues Gln-47 to Thr-51. The segment at Asp-68–Gly-71 is G3. GTP-binding positions include Asp-68–Leu-72 and Thr-131–Asp-134. Residues Thr-131–Asp-134 form a G4 region. The tract at residues Val-165–Ala-167 is G5. The region spanning Leu-217–Lys-299 is the KH type-2 domain.

Belongs to the TRAFAC class TrmE-Era-EngA-EngB-Septin-like GTPase superfamily. Era GTPase family. In terms of assembly, monomer.

It localises to the cytoplasm. The protein localises to the cell membrane. An essential GTPase that binds both GDP and GTP, with rapid nucleotide exchange. Plays a role in 16S rRNA processing and 30S ribosomal subunit biogenesis and possibly also in cell cycle regulation and energy metabolism. This chain is GTPase Era, found in Nocardioides sp. (strain ATCC BAA-499 / JS614).